Reading from the N-terminus, the 361-residue chain is tRNA/tmRNA (uracil-C(5))-methyltransferase (361 aa).

Residues glutamine 185, tyrosine 213, asparagine 218, glutamate 234, and aspartate 294 each contribute to the S-adenosyl-L-methionine site. Cysteine 319 acts as the Nucleophile in catalysis. Glutamate 353 functions as the Proton acceptor in the catalytic mechanism.

This sequence belongs to the class I-like SAM-binding methyltransferase superfamily. RNA M5U methyltransferase family. TrmA subfamily.

The enzyme catalyses uridine(54) in tRNA + S-adenosyl-L-methionine = 5-methyluridine(54) in tRNA + S-adenosyl-L-homocysteine + H(+). The catalysed reaction is uridine(341) in tmRNA + S-adenosyl-L-methionine = 5-methyluridine(341) in tmRNA + S-adenosyl-L-homocysteine + H(+). In terms of biological role, dual-specificity methyltransferase that catalyzes the formation of 5-methyluridine at position 54 (m5U54) in all tRNAs, and that of position 341 (m5U341) in tmRNA (transfer-mRNA). The chain is tRNA/tmRNA (uracil-C(5))-methyltransferase from Pseudomonas putida (strain W619).